The sequence spans 193 residues: MRLFGLILAGGEGRRMGGTDKASLTLGGRLLVTWVAERLGPQVEELAISANGDPARFAGLGLPVLRDEHPQGPLSGVLAGLRWAAAAGADALVTAPVDTPFVPGDLAPRLWLAGEGTCAVAEAGGRVHPACGLWPVAVAEDLAAWLAAGEARVMGFAARHGAARAGFPDENAFLNLNAPEDLARAESLLRKDA.

Residues 8–10, lysine 21, aspartate 67, and aspartate 98 contribute to the GTP site; that span reads LAG. Residue aspartate 98 participates in Mg(2+) binding.

The protein belongs to the MobA family. As to quaternary structure, monomer. It depends on Mg(2+) as a cofactor.

The protein localises to the cytoplasm. The enzyme catalyses Mo-molybdopterin + GTP + H(+) = Mo-molybdopterin guanine dinucleotide + diphosphate. Transfers a GMP moiety from GTP to Mo-molybdopterin (Mo-MPT) cofactor (Moco or molybdenum cofactor) to form Mo-molybdopterin guanine dinucleotide (Mo-MGD) cofactor. This chain is Molybdenum cofactor guanylyltransferase, found in Cereibacter sphaeroides (strain ATCC 17023 / DSM 158 / JCM 6121 / CCUG 31486 / LMG 2827 / NBRC 12203 / NCIMB 8253 / ATH 2.4.1.) (Rhodobacter sphaeroides).